A 353-amino-acid polypeptide reads, in one-letter code: Pleckstrin-2 (353 aa).

At M1 the chain carries N-acetylmethionine. The region spanning 4 to 104 is the PH 1 domain; that stretch reads GVLKEGFLVK…WAFEITGAIH (101 aa). S120 carries the phosphoserine modification. The DEP domain maps to 139 to 225; the sequence is TSTGIRPSPN…DSTALYTFAE (87 aa). Residues 247–353 form the PH 2 domain; that stretch reads TVVKQGYLSK…EWIEAIKKLT (107 aa).

In terms of tissue distribution, ubiquitous. Most abundant in the thymus, large bowel, small bowel, stomach, and prostate.

It is found in the cell projection. It localises to the lamellipodium membrane. The protein localises to the cytoplasm. The protein resides in the cytoskeleton. Functionally, may help orchestrate cytoskeletal arrangement. Contribute to lamellipodia formation. Overexpression of pleckstrin 2 causes large lamellipodia and peripheral ruffle formation. The chain is Pleckstrin-2 (Plek2) from Mus musculus (Mouse).